A 393-amino-acid polypeptide reads, in one-letter code: Synaptic vesicle membrane protein VAT-1 homolog (393 aa).

Residues 1 to 40 (MSDEREVAEAATGEDASSPPPKTEAASDPQHPAASEGAAA) are disordered. An N-acetylserine modification is found at Ser2. Residues Ser2, Ser18, Ser27, Ser35, and Ser44 each carry the phosphoserine modification.

This sequence belongs to the zinc-containing alcohol dehydrogenase family. Quinone oxidoreductase subfamily. In terms of tissue distribution, expressed in brain. Also expressed in glioblastoma cells.

It is found in the cytoplasm. The protein resides in the mitochondrion outer membrane. Functionally, possesses ATPase activity. Plays a part in calcium-regulated keratinocyte activation in epidermal repair mechanisms. Has no effect on cell proliferation. Negatively regulates mitochondrial fusion in cooperation with mitofusin proteins (MFN1-2). The protein is Synaptic vesicle membrane protein VAT-1 homolog (VAT1) of Homo sapiens (Human).